Here is a 373-residue protein sequence, read N- to C-terminus: Dual-specificity RNA methyltransferase RlmN (373 aa).

Glu-91 (proton acceptor) is an active-site residue. Residues 97 to 339 (EDDRGTLCIS…TTVRKTRGDD (243 aa)) form the Radical SAM core domain. The cysteines at positions 104 and 344 are disulfide-linked. 3 residues coordinate [4Fe-4S] cluster: Cys-111, Cys-115, and Cys-118. S-adenosyl-L-methionine contacts are provided by residues 165–166 (GE), Ser-197, 219–221 (SLH), and Asn-301. The active-site S-methylcysteine intermediate is the Cys-344.

It belongs to the radical SAM superfamily. RlmN family. [4Fe-4S] cluster is required as a cofactor.

It localises to the cytoplasm. The enzyme catalyses adenosine(2503) in 23S rRNA + 2 reduced [2Fe-2S]-[ferredoxin] + 2 S-adenosyl-L-methionine = 2-methyladenosine(2503) in 23S rRNA + 5'-deoxyadenosine + L-methionine + 2 oxidized [2Fe-2S]-[ferredoxin] + S-adenosyl-L-homocysteine. The catalysed reaction is adenosine(37) in tRNA + 2 reduced [2Fe-2S]-[ferredoxin] + 2 S-adenosyl-L-methionine = 2-methyladenosine(37) in tRNA + 5'-deoxyadenosine + L-methionine + 2 oxidized [2Fe-2S]-[ferredoxin] + S-adenosyl-L-homocysteine. Its function is as follows. Specifically methylates position 2 of adenine 2503 in 23S rRNA and position 2 of adenine 37 in tRNAs. m2A2503 modification seems to play a crucial role in the proofreading step occurring at the peptidyl transferase center and thus would serve to optimize ribosomal fidelity. The polypeptide is Dual-specificity RNA methyltransferase RlmN (Paracidovorax citrulli (strain AAC00-1) (Acidovorax citrulli)).